Reading from the N-terminus, the 140-residue chain is Small ribosomal subunit protein uS12 (140 aa).

Residue Asp102 is modified to 3-methylthioaspartic acid.

It belongs to the universal ribosomal protein uS12 family. In terms of assembly, part of the 30S ribosomal subunit. Contacts proteins S8 and S17. May interact with IF1 in the 30S initiation complex.

In terms of biological role, with S4 and S5 plays an important role in translational accuracy. Functionally, interacts with and stabilizes bases of the 16S rRNA that are involved in tRNA selection in the A site and with the mRNA backbone. Located at the interface of the 30S and 50S subunits, it traverses the body of the 30S subunit contacting proteins on the other side and probably holding the rRNA structure together. The combined cluster of proteins S8, S12 and S17 appears to hold together the shoulder and platform of the 30S subunit. The polypeptide is Small ribosomal subunit protein uS12 (Bacillus cytotoxicus (strain DSM 22905 / CIP 110041 / 391-98 / NVH 391-98)).